A 332-amino-acid polypeptide reads, in one-letter code: Ferredoxin--NADP reductase 2 (332 aa).

FAD contacts are provided by aspartate 33, glutamine 41, tyrosine 46, valine 86, isoleucine 121, aspartate 282, and serine 325.

This sequence belongs to the ferredoxin--NADP reductase type 2 family. In terms of assembly, homodimer. FAD serves as cofactor.

It catalyses the reaction 2 reduced [2Fe-2S]-[ferredoxin] + NADP(+) + H(+) = 2 oxidized [2Fe-2S]-[ferredoxin] + NADPH. This is Ferredoxin--NADP reductase 2 from Sulfolobus acidocaldarius (strain ATCC 33909 / DSM 639 / JCM 8929 / NBRC 15157 / NCIMB 11770).